The primary structure comprises 1028 residues: Sporulation-specific protein 3 (1028 aa).

It is found in the prospore membrane. Its function is as follows. Has a role in spore morphogenesis. Involved in the assembly of the forespore membrane. This Schizosaccharomyces pombe (strain 972 / ATCC 24843) (Fission yeast) protein is Sporulation-specific protein 3 (spo3).